The following is a 635-amino-acid chain: Beta-mannosyltransferase 2 (635 aa).

The Cytoplasmic segment spans residues 1 to 6 (MRTRLN). A helical transmembrane segment spans residues 7 to 27 (FLLLCIASVLSVIWIGVLLTW). The Extracellular segment spans residues 28–635 (NDNNLGGISL…EKKEAEKKGK (608 aa)). N-linked (GlcNAc...) asparagine glycosylation occurs at asparagine 484. Residues 512 to 635 (TRGEAERRRR…EKKEAEKKGK (124 aa)) adopt a coiled-coil conformation. Residues 517–635 (ERRRRVAEER…EKKEAEKKGK (119 aa)) form a disordered region.

The protein belongs to the BMT family.

It is found in the membrane. Beta-mannosyltransferase involved in cell wall biosynthesis. Initiates the beta-mannosylation of core N-linked glycans. This chain is Beta-mannosyltransferase 2 (BMT2), found in Komagataella phaffii (strain ATCC 76273 / CBS 7435 / CECT 11047 / NRRL Y-11430 / Wegner 21-1) (Yeast).